A 202-amino-acid polypeptide reads, in one-letter code: Cytochrome c oxidase assembly protein CtaG (202 aa).

Over 1 to 13 (MSDKAAAPKKQGR) the chain is Cytoplasmic. Residues 14-36 (NNGAVVLMCLSFVFGMGAMSYAA) traverse the membrane as a helical; Signal-anchor for type II membrane protein segment. Residues 37–202 (VPLYRIFCQV…GGAEKVEKKL (166 aa)) lie on the Periplasmic side of the membrane. The interval 183–202 (EGPKPLASNEGGAEKVEKKL) is disordered.

It belongs to the COX11/CtaG family.

Its subcellular location is the cell inner membrane. In terms of biological role, exerts its effect at some terminal stage of cytochrome c oxidase synthesis, probably by being involved in the insertion of the copper B into subunit I. The sequence is that of Cytochrome c oxidase assembly protein CtaG from Rhizobium etli (strain CIAT 652).